A 994-amino-acid chain; its full sequence is ASI1-immunoprecipitated protein 2 (994 aa).

2 disordered regions span residues 39–182 (AEFS…SGEN) and 187–206 (KADE…NDPE). Positions 45–54 (KSDESSDENS) are enriched in basic and acidic residues. The span at 60–102 (SQCSFNGDNLLRSSGVNAPGSSHNTSSEASHLVNSNHDTSSEN) shows a compositional bias: polar residues. Composition is skewed to basic and acidic residues over residues 119–140 (LLDR…DHQA) and 148–163 (KVKE…EKKN). The PHD-type zinc finger occupies 212–263 (VKVCDTCGDAGREDLLAICSRCSDGAEHTYCMRVMLKKVPKGYWLCEECKFA). Residues cysteine 215, cysteine 218, cysteine 230, cysteine 233, histidine 239, cysteine 242, cysteine 257, and cysteine 260 each coordinate Zn(2+). Disordered stretches follow at residues 342–567 (AHYS…NNKG) and 839–875 (CSNP…TDRT). The span at 371-384 (SFLKSNSFNSLSSR) shows a compositional bias: low complexity. 2 stretches are compositionally biased toward polar residues: residues 417–435 (VGKS…NCND) and 449–464 (TEAN…NSSI). 3 stretches are compositionally biased toward basic and acidic residues: residues 469–478 (SPRDLKDLQS), 536–552 (PRSR…KDAV), and 858–875 (DTFR…TDRT).

Component of the ASI1-AIPP1-EDM2 (AAE) RNA regulatory complex composed of at least AIPP1/EDM3, ASI1 and EDM2 and may contain CPL2, AIPP2 and AIPP3/BDT1. Part of the BAH-PHD bivalent histone reader complex that contains AIPP2, PAIPP2 and AIPP3/BDT1; the BAH-PHD module associates with CPL2 to form the BAH-PHD-CPL2 complex (BPC) for transcriptional repression. Binds directly to ASI1, AIPP3/BDT1 and CPL2 but not to PAIPP2. As to expression, expressed ubiquitously.

Its function is as follows. Together with AIPP3/BDT1 and PAIPP2, cooperates to form a BAH-PHD bivalent histone reader complex able to read histone H3 lysine 27 trimethylation (H3K27me3) and low-methylated H3K4 histone marks in order to regulate transcription, especially to prevent early flowering; promotes AIPP3/BDT1 binding to H3K27me3. CPL2 is subsequently recruited to form a BAH-PHD-CPL2 complex (BPC) in order to silence several H3K27me3 and low-methylated H3K4 enriched loci, including AGO5, via the phosphorylation state-dependent inhibition of Pol II release from the transcriptional start site (e.g. Ser5P-Pol II dephosphorylation). The BPC complex represses flowering by inhibiting the expression of several genes, including AGL6, FT, FUL and SOC1. Prevents the accumulation of intronic heterochromatin-containing genes (e.g. IBM1, At3g05410 and RPP7). This chain is ASI1-immunoprecipitated protein 2, found in Arabidopsis thaliana (Mouse-ear cress).